The primary structure comprises 168 residues: Calcium-binding protein 2 (168 aa).

EF-hand domains lie at 13–48 (GMEK…AGKK), 48–83 (KNPE…MNDE), 88–123 (VLNW…QGAE), and 124–159 (DPEL…KKFS). Residues D26, D28, N30, K32, E37, D61, D63, N65, E67, E72, D101, D103, D105, K107, E112, D137, D139, D141, and E148 each contribute to the Ca(2+) site.

Its function is as follows. Not known; probably binds four calcium ions. In Dictyostelium discoideum (Social amoeba), this protein is Calcium-binding protein 2 (cbp2).